Consider the following 416-residue polypeptide: Isobutyryl-CoA dehydrogenase, mitochondrial (416 aa).

The N-terminal 21 residues, 1–21 (MISGLFKLSNKQSVLQNATKL), are a transit peptide targeting the mitochondrion. FAD-binding positions include 156-165 (YCLTEPGSGS) and 189-191 (FIS). S165 lines the substrate pocket. Position 273 to 276 (273 to 276 (NGGR)) interacts with substrate. Residues R301, 311 to 312 (FQ), and 370 to 374 (QLFGG) each bind FAD. E397 (proton acceptor) is an active-site residue. 399 to 401 (SDA) serves as a coordination point for FAD. R409 is a substrate binding site.

Belongs to the acyl-CoA dehydrogenase family. In terms of assembly, homotetramer. It depends on FAD as a cofactor.

The protein localises to the mitochondrion. It carries out the reaction 2-methylpropanoyl-CoA + oxidized [electron-transfer flavoprotein] + H(+) = 2-methylpropenoyl-CoA + reduced [electron-transfer flavoprotein]. The catalysed reaction is (2S)-2-methylbutanoyl-CoA + oxidized [electron-transfer flavoprotein] + H(+) = (2E)-2-methylbut-2-enoyl-CoA + reduced [electron-transfer flavoprotein]. The enzyme catalyses propanoyl-CoA + oxidized [electron-transfer flavoprotein] + H(+) = acryloyl-CoA + reduced [electron-transfer flavoprotein]. It participates in amino-acid degradation; L-valine degradation. Isobutyryl-CoA dehydrogenase which catalyzes one of the steps of the valine catabolic pathway. To a lesser extent, is also able to catalyze the oxidation of (2S)-2-methylbutanoyl-CoA. The sequence is that of Isobutyryl-CoA dehydrogenase, mitochondrial (acad8) from Dictyostelium discoideum (Social amoeba).